The primary structure comprises 452 residues: Probable ECA polymerase (452 aa).

Helical transmembrane passes span 6 to 26, 37 to 57, 63 to 83, 118 to 138, 155 to 175, 181 to 201, 207 to 227, 228 to 248, 341 to 361, 378 to 398, and 410 to 430; these read FSGL…LTWF, VFFS…TSVL, VGVA…CFYG, VILM…NGFL, GVAL…VYFL, AWLF…MIVG, IIIA…ISLW, MLAA…LKRY, LVVM…GLII, YKAA…IVLA, and VFFL…FWLF.

Belongs to the WzyE family. Probably part of a complex composed of WzxE, WzyE and WzzE.

The protein localises to the cell inner membrane. It participates in bacterial outer membrane biogenesis; enterobacterial common antigen biosynthesis. Functionally, probably involved in the polymerization of enterobacterial common antigen (ECA) trisaccharide repeat units. The sequence is that of Probable ECA polymerase from Salmonella typhi.